The primary structure comprises 254 residues: Protein Thf1 (254 aa).

Residues 182 to 241 (EEKMKKDLDLYRSNLEKMNQVLEVLEDALAVERQRREKAEAEAKAKTAEATVATETNDEQ) are a coiled coil. Residues 215–228 (QRREKAEAEAKAKT) are compositionally biased toward basic and acidic residues. Residues 215–254 (QRREKAEAEAKAKTAEATVATETNDEQDEQKETSESGSDA) are disordered.

The protein belongs to the THF1 family.

Functionally, may be involved in photosynthetic membrane biogenesis. This Picosynechococcus sp. (strain ATCC 27264 / PCC 7002 / PR-6) (Agmenellum quadruplicatum) protein is Protein Thf1.